The primary structure comprises 272 residues: Leucoagglutinating phytohemagglutinin (272 aa).

Residues 1–20 form the signal peptide; sequence MASSKFFTVLFLVLLTHANS. Asn-32 is a glycosylation site (N-linked (GlcNAc...) (high mannose) asparagine). The N-linked (GlcNAc...) (complex) asparagine glycan is linked to Asn-80.

Belongs to the leguminous lectin family. Homotetramer. In terms of processing, N-glycosylated on Asn-80; contains xylose.

This insecticidal carbohydrate-binding lectin is toxic for the cowpea weevil. The sequence is that of Leucoagglutinating phytohemagglutinin (DLEC2) from Phaseolus vulgaris (Kidney bean).